Here is a 197-residue protein sequence, read N- to C-terminus: Cytochrome c biogenesis ATP-binding export protein CcmA (197 aa).

Residues 1–196 (MSMLSLHQLQ…VIKSAQILQL (196 aa)) enclose the ABC transporter domain. 35 to 42 (GANGSGKS) is a binding site for ATP.

It belongs to the ABC transporter superfamily. CcmA exporter (TC 3.A.1.107) family. As to quaternary structure, the complex is composed of two ATP-binding proteins (CcmA) and two transmembrane proteins (CcmB).

It is found in the cell inner membrane. The enzyme catalyses heme b(in) + ATP + H2O = heme b(out) + ADP + phosphate + H(+). In terms of biological role, part of the ABC transporter complex CcmAB involved in the biogenesis of c-type cytochromes; once thought to export heme, this seems not to be the case, but its exact role is uncertain. Responsible for energy coupling to the transport system. The sequence is that of Cytochrome c biogenesis ATP-binding export protein CcmA from Rickettsia typhi (strain ATCC VR-144 / Wilmington).